Reading from the N-terminus, the 239-residue chain is tRNA (guanine-N(7)-)-methyltransferase (239 aa).

S-adenosyl-L-methionine is bound by residues E69, E94, D121, and D144. D144 is a catalytic residue. K148 is a substrate binding site. The tract at residues 150 to 155 is interaction with RNA; sequence RHNKRR. Residues D180 and 217-220 contribute to the substrate site; that span reads TKFE.

The protein belongs to the class I-like SAM-binding methyltransferase superfamily. TrmB family. Monomer.

The enzyme catalyses guanosine(46) in tRNA + S-adenosyl-L-methionine = N(7)-methylguanosine(46) in tRNA + S-adenosyl-L-homocysteine. It functions in the pathway tRNA modification; N(7)-methylguanine-tRNA biosynthesis. In terms of biological role, catalyzes the formation of N(7)-methylguanine at position 46 (m7G46) in tRNA. The polypeptide is tRNA (guanine-N(7)-)-methyltransferase (Cronobacter sakazakii (strain ATCC BAA-894) (Enterobacter sakazakii)).